The sequence spans 476 residues: Beta-xylosidase (476 aa).

The active-site Proton donor is E188. E292 acts as the Nucleophile in catalysis. A glycan (N-linked (GlcNAc...) asparagine) is linked at N468.

It belongs to the glycosyl hydrolase 5 (cellulase A) family.

The protein localises to the secreted. It carries out the reaction Hydrolysis of (1-&gt;4)-beta-D-xylans, to remove successive D-xylose residues from the non-reducing termini.. Functionally, catalyzes the hydrolysis of xylo-oligomers to xylose units and plays an important role in xylan degradation. Can also perform the transglycosylation of xylose and alcohol. Has no endoglucanase activity. The sequence is that of Beta-xylosidase from Phanerodontia chrysosporium (White-rot fungus).